We begin with the raw amino-acid sequence, 304 residues long: ATP phosphoribosyltransferase (304 aa).

This sequence belongs to the ATP phosphoribosyltransferase family.

The protein localises to the cytoplasm. It catalyses the reaction 1-(5-phospho-beta-D-ribosyl)-ATP + diphosphate = 5-phospho-alpha-D-ribose 1-diphosphate + ATP. It functions in the pathway amino-acid biosynthesis; L-histidine biosynthesis; L-histidine from 5-phospho-alpha-D-ribose 1-diphosphate: step 1/9. Its function is as follows. Catalyzes the condensation of ATP and 5-phosphoribose 1-diphosphate to form N'-(5'-phosphoribosyl)-ATP (PR-ATP). Has a crucial role in the pathway because the rate of histidine biosynthesis seems to be controlled primarily by regulation of the enzymatic activity. This Debaryomyces hansenii (strain ATCC 36239 / CBS 767 / BCRC 21394 / JCM 1990 / NBRC 0083 / IGC 2968) (Yeast) protein is ATP phosphoribosyltransferase (HIS1).